The following is a 599-amino-acid chain: MPRVAKPKAAAPAKKVVSAKKAKSKLYKMPEKVKEGTVFTDLAKGQWRIGPSIGVGGFGEIYAACKVGEKNYDAVVKCEPHGNGPLFVEMHFYLRNAKLEDIKQFMQKHGLKSLGMPYILANGSVEVNGEKHRFIVMPRYGSDLTKFLEQNGKRLPEGTVYRLAIQMLDVYQYMHSNGYVHADLKAANILLGLEKGGAAQAYLVDFGLASHFVTGDFKPDPKKMHNGTIEYTSRDAHLGVPTRRADLEILGYNLIEWLGAELPWVTQKLLAVPPKVQKAKEAFMDNIGESLKTLFPKGVPPPIGDFMKYVSKLTHNQEPDYDKCRSWFSSALKQLKIPNNGDLDFKMKPQTSSNNNLSPPGTSKAATARKAKKIDSPVLNSSLDEKISASEDDEEEEEKSHRKKTAKKVTPSARNAKVSPLKRVADSSPPSQKRVKTEPKSTPRERATPKASPKPRSTPKASPKPQTPTAARLRTPNAKINFSPSISLRGRPGGKTVINDDLTPQPRSKKTYEFNFELDVSMDANVIVNVKRKKKADQDKATAVDSRTPSSRSALASSSKEEASPVTRVNLRKVNGHGDSSTPGRSPRTPAVTVRKYQG.

The Protein kinase domain maps to 47-328 (WRIGPSIGVG…PDYDKCRSWF (282 aa)). ATP is bound by residues 53–61 (IGVGGFGEI) and K77. Catalysis depends on D183, which acts as the Proton acceptor. Disordered stretches follow at residues 340–507 (NGDL…PQPR) and 532–599 (RKKK…KYQG). Residues 349–361 (PQTSSNNNLSPPG) are compositionally biased toward polar residues. S376, S381, S382, S388, and S390 each carry phosphoserine. Over residues 435–448 (VKTEPKSTPRERAT) the composition is skewed to basic and acidic residues. S483 is modified (phosphoserine). Residues 546–558 (SRTPSSRSALASS) show a composition bias toward low complexity. A phosphoserine mark is found at S564 and S586. Phosphothreonine is present on T589.

The protein belongs to the protein kinase superfamily. CK1 Ser/Thr protein kinase family. VRK subfamily. In terms of assembly, may interact with Unc-89 (via protein kinase domain 1). Interacts with L(2)gl. The cofactor is Mg(2+). In terms of processing, phosphorylated during mitosis and female meiosis. In terms of tissue distribution, expressed in ovaries (at protein level). Expressed in indirect flight muscle (IFM) (at protein level).

The protein localises to the cytoplasm. Its subcellular location is the nucleus. The protein resides in the chromosome. It is found in the myofibril. It localises to the sarcomere. The protein localises to the z line. Its subcellular location is the m line. It carries out the reaction L-seryl-[protein] + ATP = O-phospho-L-seryl-[protein] + ADP + H(+). The catalysed reaction is L-threonyl-[protein] + ATP = O-phospho-L-threonyl-[protein] + ADP + H(+). Serine/threonine-protein kinase involved in somatic mitosis and female meiosis. Required for spindle organization in mitosis, and for the establishment or maintenance of meiosis-specific chromosomal configurations, including the prophase I karyosome and the metaphase I spindle. Specifically phosphorylates nucleosomal H2A on 'Thr-119'. Required for the development and organization of indirect flight muscle sarcomeres by regulating the formation of M line and H zone and the correct assembly of thick and thin filaments in the sarcomere. The polypeptide is Nucleosomal histone kinase 1 (ball) (Drosophila melanogaster (Fruit fly)).